The following is a 149-amino-acid chain: MRAIVQRVKESSVSVDGKTIGEIKKGFTVLVGISKDDTIEDVKYLKKKVVNLRVFEDENGKLNKSLKDVDGELLIISQFTLYGDCRKGNRPSFIEALGGEDAKKLYLDFIDMCKEEINNVQTGEFGADMLVSIKNDGPVTLMIDSKKEF.

The Gly-cisPro motif, important for rejection of L-amino acids motif lies at 137–138 (GP).

Belongs to the DTD family. In terms of assembly, homodimer.

It is found in the cytoplasm. The enzyme catalyses glycyl-tRNA(Ala) + H2O = tRNA(Ala) + glycine + H(+). It catalyses the reaction a D-aminoacyl-tRNA + H2O = a tRNA + a D-alpha-amino acid + H(+). In terms of biological role, an aminoacyl-tRNA editing enzyme that deacylates mischarged D-aminoacyl-tRNAs. Also deacylates mischarged glycyl-tRNA(Ala), protecting cells against glycine mischarging by AlaRS. Acts via tRNA-based rather than protein-based catalysis; rejects L-amino acids rather than detecting D-amino acids in the active site. By recycling D-aminoacyl-tRNA to D-amino acids and free tRNA molecules, this enzyme counteracts the toxicity associated with the formation of D-aminoacyl-tRNA entities in vivo and helps enforce protein L-homochirality. This is D-aminoacyl-tRNA deacylase from Clostridium novyi (strain NT).